A 1585-amino-acid chain; its full sequence is Histone acetyltransferase lsy-12 (1585 aa).

Disordered regions lie at residues 1–37 and 279–491; these read MGKK…ARRE and GPQH…DDPV. Residues 23 to 37 show a composition bias toward basic and acidic residues; sequence PKDRTARPTAAARRE. Residues 279 to 296 show a composition bias toward polar residues; sequence GPQHENVTVSENVLSTES. Basic and acidic residues predominate over residues 302–312; that stretch reads TETKRLHDSSR. Polar residues-rich tracts occupy residues 355 to 364 and 411 to 426; these read LLSNPHSTPV and SRLS…SNDL. Positions 431–440 are enriched in low complexity; sequence SAPSSSSAAS. A compositionally biased stretch (basic residues) spans 453–469; that stretch reads QQRRKGNQSAARSRKIK. Acidic residues predominate over residues 477–491; that stretch reads QEDEPMELDSDDDPV. The MYST-type HAT domain occupies 544 to 830; the sequence is EQARLPERIH…YDPECLDWVP (287 aa). The segment at 577-602 adopts a C2HC MYST-type zinc-finger fold; it reads LFICEFCFFYARSDEIMQNHAKKCML. Lys-644 bears the N6-acetyllysine; by autocatalysis mark. Position 685-689 (685-689) interacts with acetyl-CoA; sequence SCIMT. The Proton donor/acceptor role is filled by Glu-720. Acetyl-CoA contacts are provided by Ser-724 and Lys-815. Basic and acidic residues-rich tracts occupy residues 844 to 855 and 947 to 956; these read SKEEIEQDEQRR and VLDKSNIREE. Disordered regions lie at residues 844 to 903, 927 to 1262, 1286 to 1373, and 1431 to 1507; these read SKEE…LKHE, EENK…IGKS, ESTA…ASNH, and HHQF…VHPQ. A compositionally biased stretch (polar residues) spans 977–999; that stretch reads NKCNNTESEPNPSGRKTSATSSG. Residues 1011–1022 are compositionally biased toward acidic residues; it reads TEEEEEDDDPTD. A compositionally biased stretch (basic and acidic residues) spans 1029–1046; the sequence is DDEKPFETSVNKEKNEKS. The segment covering 1047 to 1060 has biased composition (basic residues); sequence RRGKKVSKKRRSVA. Composition is skewed to basic and acidic residues over residues 1070–1081 and 1135–1151; these read VRDRDEPKKAEN and DIPK…AYDR. Low complexity predominate over residues 1164–1173; the sequence is PTPDSYHSSP. A compositionally biased stretch (polar residues) spans 1185–1194; sequence LMQAQQNIYQ. Over residues 1196–1207 the composition is skewed to basic and acidic residues; the sequence is NDCHFAENDSKP. 2 stretches are compositionally biased toward polar residues: residues 1298-1317 and 1324-1333; these read AGPS…NTTP and HPNSQQQATP. Residues 1482 to 1493 show a composition bias toward low complexity; the sequence is QHQQQQPQQPQQ.

The protein belongs to the MYST (SAS/MOZ) family.

It carries out the reaction L-lysyl-[protein] + acetyl-CoA = N(6)-acetyl-L-lysyl-[protein] + CoA + H(+). In terms of biological role, probable histone acetyltransferase. Required to initiate and then maintain lateralized gene expression in the ASE sensory neurons. Involved in determining cell fate in the ASE neurons. This is Histone acetyltransferase lsy-12 from Caenorhabditis elegans.